The chain runs to 301 residues: MKIAVLSRNAKLYSTRRLVEAAKTRGHEVRVLDVLRCYMNIASHRPSIHYKGEDLTGFDAVIPRIGASVTFYGTAVLRQFEMIGVYPLSESVAITRSRDKLRSLQLLARKGIGLPVTGFAHAPDEIDDLIKMVGGAPVVIKLLEGTQGIGVVLAENKKAAQSVIEAFMGLKTHILVQEFIKETAGSDIRCFIIGDKVVAAMKRQAPEGEFRSNLHRGGSASLVRITPEERSTAIRAAQTMGLNVAGVDILRSNHGPLVMEVNSSPGLEGIESATGKDVATKVIEFIEKNATRGRTRTRGKG.

Positions 104 to 287 constitute an ATP-grasp domain; it reads LQLLARKGIG…VATKVIEFIE (184 aa). Residues Lys-141, 178–179, Asp-187, and 211–213 contribute to the ATP site; these read EF and RSN. Residues Asp-248, Glu-260, and Asn-262 each contribute to the Mg(2+) site. Asp-248, Glu-260, and Asn-262 together coordinate Mn(2+).

It belongs to the RimK family. Mg(2+) serves as cofactor. Mn(2+) is required as a cofactor.

The sequence is that of Probable alpha-L-glutamate ligase from Nitrosococcus oceani (strain ATCC 19707 / BCRC 17464 / JCM 30415 / NCIMB 11848 / C-107).